A 172-amino-acid chain; its full sequence is S-ribosylhomocysteine lyase (172 aa).

Fe cation-binding residues include His54, His58, and Cys128.

This sequence belongs to the LuxS family. As to quaternary structure, homodimer. Fe cation is required as a cofactor.

The catalysed reaction is S-(5-deoxy-D-ribos-5-yl)-L-homocysteine = (S)-4,5-dihydroxypentane-2,3-dione + L-homocysteine. Involved in the synthesis of autoinducer 2 (AI-2) which is secreted by bacteria and is used to communicate both the cell density and the metabolic potential of the environment. The regulation of gene expression in response to changes in cell density is called quorum sensing. Catalyzes the transformation of S-ribosylhomocysteine (RHC) to homocysteine (HC) and 4,5-dihydroxy-2,3-pentadione (DPD). The protein is S-ribosylhomocysteine lyase of Aliivibrio fischeri (strain MJ11) (Vibrio fischeri).